The following is a 305-amino-acid chain: Putative lipid kinase USA300HOU_0749 (305 aa).

Residues 3 to 139 (NKYTHGVLFY…YDVIKINNQY (137 aa)) enclose the DAGKc domain. ATP-binding positions include Ser-44, 74–80 (GDGTVNE), and Thr-101. Mg(2+) is bound by residues Ser-220, Asp-223, and Glu-225. Glu-281 functions as the Proton acceptor in the catalytic mechanism.

Belongs to the diacylglycerol/lipid kinase family. The cofactor is Mg(2+).

May catalyze the ATP-dependent phosphorylation of lipids other than diacylglycerol (DAG). This chain is Putative lipid kinase USA300HOU_0749, found in Staphylococcus aureus (strain USA300 / TCH1516).